A 107-amino-acid chain; its full sequence is MTEAWRYSAQGISVALRVTPRGGRDDIDGLETLANGRTVVKVRVRAIAEGGEANRAVTELLAKALGVPKRAVRVLSGTTSRLKQVAVDGDPNELGEALRKLTAPKPD.

The protein belongs to the UPF0235 family.

This chain is UPF0235 protein RPC_0058, found in Rhodopseudomonas palustris (strain BisB18).